The following is a 143-amino-acid chain: Histone H2AX (143 aa).

The tract at residues 1–22 (MSGRGKTGGKARAKAKSRSSRA) is disordered. Serine 2 is subject to N-acetylserine. Position 2 is a phosphoserine (serine 2). 2 positions are modified to N6-acetyllysine: lysine 6 and lysine 10. Over residues 7–19 (TGGKARAKAKSRS) the composition is skewed to basic residues. N6-lactoyllysine; alternate is present on lysine 10. Glycyl lysine isopeptide (Lys-Gly) (interchain with G-Cter in ubiquitin) cross-links involve residues lysine 14 and lysine 16. Lysine 37 bears the N6-acetyllysine; by CREBBP and EP300 mark. Lysine 120 is covalently cross-linked (Glycyl lysine isopeptide (Lys-Gly) (interchain with G-Cter in ubiquitin)). A phosphoserine mark is found at serine 121 and serine 122. Residues 121-143 (SSATVGPKAPAVGKKASQASQEY) form a disordered region. Glycyl lysine isopeptide (Lys-Gly) (interchain with G-Cter in SUMO2) cross-links involve residues lysine 128 and lysine 135. Position 137 is a phosphoserine (serine 137). Serine 140 is subject to Phosphoserine; by ATM, ATR and PRKDC. The [ST]-Q motif signature appears at 140–141 (SQ). Tyrosine 143 carries the post-translational modification Phosphotyrosine; by WSTF.

It belongs to the histone H2A family. The nucleosome is a histone octamer containing two molecules each of H2A, H2B, H3 and H4 assembled in one H3-H4 heterotetramer and two H2A-H2B heterodimers. The octamer wraps approximately 147 bp of DNA. Interacts with numerous proteins required for DNA damage signaling and repair when phosphorylated on Ser-140. These include MDC1, BRCA1 and the MRN complex, composed of MRE11, RAD50, and NBN. Interaction with the MRN complex is mediated at least in part by NBN. Also interacts with DHX9/NDHII when phosphorylated on Ser-140 and MCPH1 when phosphorylated at Ser-140 or Tyr-143. Interacts with ARRB2; the interaction is detected in the nucleus upon OR1D2 stimulation. Interacts with WRAP53/TCAB1. Interacts with TP53BP1. Interacts with HDGFL2. Post-translationally, phosphorylated on Ser-140 (to form gamma-H2AX or H2AX139ph) in response to DNA double strand breaks (DSBs) generated by exogenous genotoxic agents, by stalled replication forks, by meiotic recombination events and during immunoglobulin class switching in lymphocytes. Phosphorylation can extend up to several thousand nucleosomes from the actual site of the DSB and may mark the surrounding chromatin for recruitment of proteins required for DNA damage signaling and repair. Widespread phosphorylation may also serve to amplify the damage signal or aid repair of persistent lesions. Phosphorylation of Ser-140 (H2AX139ph) in response to ionizing radiation is mediated by both ATM and PRKDC while defects in DNA replication induce Ser-140 phosphorylation (H2AX139ph) subsequent to activation of ATR and PRKDC. Dephosphorylation of Ser-140 by PP2A is required for DNA DSB repair. In meiosis, Ser-140 phosphorylation (H2AX139ph) first occurs at synaptonemal complexes during leptotene and is an ATM-dependent response to the formation of programmed DSBs by SPO11. Ser-140 phosphorylation (H2AX139ph) subsequently occurs at unsynapsed regions of both autosomes and the XY bivalent during zygotene and is ATR- and BRCA1-dependent. Ser-140 phosphorylation (H2AX139ph) may also be required for transcriptional repression of unsynapsed chromatin and meiotic sex chromosome inactivation (MSCI), whereby the X and Y chromosomes condense in pachytene to form the heterochromatic XY-body. During immunoglobulin class switch recombination in lymphocytes, Ser-140 phosphorylation (H2AX139ph) at sites of DNA-recombination requires the activation-induced cytidine deaminase AICDA. Phosphorylation at Tyr-143 (H2AXY142ph) by BAZ1B/WSTF determines the relative recruitment of either DNA repair or pro-apoptotic factors. Phosphorylation at Tyr-143 (H2AXY142ph) favors the recruitment of APBB1/FE65 and pro-apoptosis factors such as MAPK8/JNK1, triggering apoptosis. In contrast, dephosphorylation of Tyr-143 by EYA proteins (EYA1, EYA2, EYA3 or EYA4) favors the recruitment of MDC1-containing DNA repair complexes to the tail of phosphorylated Ser-140 (H2AX139ph). Phosphorylated by VRK1. Monoubiquitination of Lys-120 (H2AXK119ub) by RING1 and RNF2/RING2 complex gives a specific tag for epigenetic transcriptional repression. Following DNA double-strand breaks (DSBs), it is ubiquitinated through 'Lys-63' linkage of ubiquitin moieties by the E2 ligase UBE2N and the E3 ligases RNF8 and RNF168, leading to the recruitment of repair proteins to sites of DNA damage. Ubiquitination at Lys-14 and Lys-16 (H2AK13Ub and H2AK15Ub, respectively) in response to DNA damage is initiated by RNF168 that mediates monoubiquitination at these 2 sites, and 'Lys-63'-linked ubiquitin are then conjugated to monoubiquitin; RNF8 is able to extend 'Lys-63'-linked ubiquitin chains in vitro. H2AK119Ub and ionizing radiation-induced 'Lys-63'-linked ubiquitination (H2AK13Ub and H2AK15Ub) are distinct events. In terms of processing, acetylation at Lys-6 (H2AXK5ac) by KAT5 component of the NuA4 histone acetyltransferase complex promotes NBN/NBS1 assembly at the sites of DNA damage. Acetylation at Lys-37 increases in S and G2 phases. This modification has been proposed to be important for DNA double-strand break repair. Most abundant in testis, thymus and spleen.

It localises to the nucleus. The protein resides in the chromosome. In terms of biological role, variant histone H2A which replaces conventional H2A in a subset of nucleosomes. Nucleosomes wrap and compact DNA into chromatin, limiting DNA accessibility to the cellular machineries which require DNA as a template. Histones thereby play a central role in transcription regulation, DNA repair, DNA replication and chromosomal stability. DNA accessibility is regulated via a complex set of post-translational modifications of histones, also called histone code, and nucleosome remodeling. Required for checkpoint-mediated arrest of cell cycle progression in response to low doses of ionizing radiation and for efficient repair of DNA double strand breaks (DSBs) specifically when modified by C-terminal phosphorylation. The chain is Histone H2AX from Mus musculus (Mouse).